The primary structure comprises 687 residues: Adhesion G-protein coupled receptor G1 (687 aa).

Positions 1–25 (MTAQSLLQMTLFLLSLLFLVQGAHG) are cleaved as a signal peptide. 26 to 33 (RGHREDFR) is a binding site for heparin. Residues 26–402 (RGHREDFRFC…VEVDAVHKHY (377 aa)) are Extracellular-facing. 2 cysteine pairs are disulfide-bonded: cysteine 35/cysteine 91 and cysteine 121/cysteine 177. 3 N-linked (GlcNAc...) asparagine glycosylation sites follow: asparagine 39, asparagine 148, and asparagine 171. 190-200 (LKHPQKASRRP) is a binding site for heparin. Positions 224-395 (DTVSFEEDRI…AVLMVSSVEV (172 aa)) constitute a GAIN-B domain. Asparagine 234, asparagine 303, asparagine 324, and asparagine 341 each carry an N-linked (GlcNAc...) asparagine glycan. Cystine bridges form between cysteine 346/cysteine 377 and cysteine 366/cysteine 379. The tract at residues 346–395 (CVFWVEDPTLSSPGHWSSAGCETVRRETQTSCFCNHLTYFAVLMVSSVEV) is GPS. The segment at 384–397 (YFAVLMVSSVEVDA) is stachel. A helical transmembrane segment spans residues 403 to 423 (LSLLSYVGCVISALACVVTIA). At 424–442 (AYLCSRRKPRDYTIKVHMN) the chain is on the cytoplasmic side. Residues 443 to 463 (LLLAVFLLDMSFLLSEPVALT) traverse the membrane as a helical segment. Residues 464-470 (GSEAGCR) are Extracellular-facing. Residues 471 to 491 (AGAIFLHFSLLACLSWMGLEG) form a helical membrane-spanning segment. Topologically, residues 492–512 (YNLYRLVVEVFGTYVPGYLLK) are cytoplasmic. Residues 513-533 (LSAMGWGFPIFLVTLVALVDV) form a helical membrane-spanning segment. The Extracellular segment spans residues 534–570 (DNYGPIILAVHRTPESVIYPSMCWIRDSLVSYVTNLG). The helical transmembrane segment at 571–591 (LFSLVFLFNMAMLGTMVVQIL) threads the bilayer. Residues 592–603 (RLRPHTQKWSHV) are Cytoplasmic-facing. A helical membrane pass occupies residues 604–624 (LTLLGLSLVLGLPWALIFFSF). At 625–630 (ASGTFQ) the chain is on the extracellular side. Residues 631 to 651 (LVVLYLFSIITSFQGFLIFIW) form a helical membrane-spanning segment. The Cytoplasmic portion of the chain corresponds to 652 to 687 (YWSMRLQARGGPSPLKSNSDSARLPISSGSTSSSRI). Residues 664-687 (SPLKSNSDSARLPISSGSTSSSRI) form a disordered region. Residues 678 to 687 (SSGSTSSSRI) are compositionally biased toward low complexity.

The protein belongs to the G-protein coupled receptor 2 family. LN-TM7 subfamily. As to quaternary structure, heterodimer of 2 chains generated by proteolytic processing; the large extracellular N-terminal fragment (ADGRG1 NT) and the membrane-bound C-terminal fragment (ADGRG1-CT) predominantly remain associated and non-covalently linked. ADGRG1 NT self-associates in a trans-trans manner; the homophilic interaction enhances receptor signaling. Interacts with TGM2. Interacts with heparin; leading to the reduction of ADGRG1 shedding. Interacts with COL3A1. Part of a GPCR-tetraspanin complex at least consisting of ADGRG1, CD81, eventually CD9, and GNA11 in which CD81 is enhancing the association of ADGRG1 with GNA11. Post-translationally, autoproteolytically cleaved into 2 fragments; the large extracellular N-terminal fragment (ADGRG1 NT) and the membrane-bound C-terminal fragment (ADGRG1 CT) predominantly remain associated and non-covalently linked. Shedding to yield the secreted ADGRG1 N-terminal fragment seems to involve metalloprotease(s). In terms of processing, ubiquitinated. Undergoes polyubiquitination upon activation.

Its subcellular location is the cell membrane. The protein resides in the secreted. It localises to the membrane raft. With respect to regulation, forms a heterodimer of 2 chains generated by proteolytic processing that remain associated through non-covalent interactions mediated by the GAIN-B domain. In the inactivated receptor, the Stachel sequence (also named stalk) is embedded in the GAIN-B domain, where it adopts a beta-strand conformation. On activation, the Stachel moves into the 7 transmembrane region and adopts a twisted hook-shaped configuration that forms contacts within the receptor, leading to coupling of a G-alpha protein, which activates signaling. The cleaved GAIN-B and N-terminal domains can then dissociate from the rest of the receptor. In terms of biological role, adhesion G-protein coupled receptor (aGPCR) for steroid hormone 17alpha-hydroxypregnenolone (17-OH), which is involved in cell adhesion and cell-cell interactions. Ligand binding causes a conformation change that triggers signaling via guanine nucleotide-binding proteins (G proteins) and modulates the activity of downstream effectors, such as RhoA pathway. ADGRG1 is coupled to G(12) and/or G(13) G proteins (GNA12 and GNA13, respectively) and mediates the activation Rho small GTPases. Acts as a potent suppressor of ferroptosis: binding to 17-OH-binding initiates signaling that down-regulates CD36 and alleviates ferroptosis-induced liver injury. Ligand-binding also induces cell adhesion activity via association with proteins such as collagen III/COL3A1 and TGM2. Mediates cell matrix adhesion in developing neurons and hematopoietic stem cells. Involved in cortical development, specifically in maintenance of the pial basement membrane integrity and in cortical lamination: association with COL3A1 in the developing brain inhibits neuronal migration via activation of the RhoA pathway. Together with TGM2, acts as a regulator of myelination and myelin repair in oligodendrocyte precursor cells. Acts as a hemostatic sensor of shear force: G protein-coupled receptor signaling is activated in response to shear force in platelets, promoting G(13) G protein signaling, and platelet shape change and aggregation in a COL3A1-dependent manner. Acts as an inhibitor of VEGFA production thereby inhibiting angiogenesis through a signaling pathway mediated by PRKCA. Plays a role in the maintenance of hematopoietic stem cells in bone marrow niche. Plays an essential role in testis development. This chain is Adhesion G-protein coupled receptor G1 (ADGRG1), found in Pongo pygmaeus (Bornean orangutan).